Reading from the N-terminus, the 250-residue chain is Protein REVERSION-TO-ETHYLENE SENSITIVITY1 (250 aa).

The next 3 helical transmembrane spans lie at 55-75, 200-220, and 221-241; these read IVWT…HIGL, SVVR…VLVG, and WPFL…FIIA.

As to quaternary structure, interacts with ETR1 through a region corresponding to its ethylene-binding domain. In terms of tissue distribution, strongly expressed in 1-4-day-old seedlings in the apical hook, cotyledons, root vascular tissue, root tip and root hairs, with little or no expression in the hypocotyl. In light-grown seedlings, expression could also be seen in the apex and young leaves, and disappeared from the cotyledons by 10 days. In mature plants, expressed in floral buds, the style of mature flowers, stems and the rachis.

Its subcellular location is the endoplasmic reticulum membrane. It is found in the golgi apparatus membrane. Functionally, acts at an early step in the ethylene signaling pathway. Positively regulates ETR1, leading to the negative regulation of ethylene responses. In Arabidopsis thaliana (Mouse-ear cress), this protein is Protein REVERSION-TO-ETHYLENE SENSITIVITY1 (RTE1).